A 358-amino-acid polypeptide reads, in one-letter code: Phospho-N-acetylmuramoyl-pentapeptide-transferase (358 aa).

10 helical membrane-spanning segments follow: residues phenylalanine 24–valine 44, threonine 73–leucine 93, asparagine 95–aspartate 115, methionine 134–phenylalanine 154, glutamate 169–valine 189, glycine 197–alanine 217, glycine 233–tryptophan 253, valine 261–leucine 281, isoleucine 286–valine 306, and lysine 335–leucine 355.

This sequence belongs to the glycosyltransferase 4 family. MraY subfamily. Mg(2+) is required as a cofactor.

It is found in the cell inner membrane. It catalyses the reaction UDP-N-acetyl-alpha-D-muramoyl-L-alanyl-gamma-D-glutamyl-meso-2,6-diaminopimeloyl-D-alanyl-D-alanine + di-trans,octa-cis-undecaprenyl phosphate = di-trans,octa-cis-undecaprenyl diphospho-N-acetyl-alpha-D-muramoyl-L-alanyl-D-glutamyl-meso-2,6-diaminopimeloyl-D-alanyl-D-alanine + UMP. It participates in cell wall biogenesis; peptidoglycan biosynthesis. In terms of biological role, catalyzes the initial step of the lipid cycle reactions in the biosynthesis of the cell wall peptidoglycan: transfers peptidoglycan precursor phospho-MurNAc-pentapeptide from UDP-MurNAc-pentapeptide onto the lipid carrier undecaprenyl phosphate, yielding undecaprenyl-pyrophosphoryl-MurNAc-pentapeptide, known as lipid I. This Citrifermentans bemidjiense (strain ATCC BAA-1014 / DSM 16622 / JCM 12645 / Bem) (Geobacter bemidjiensis) protein is Phospho-N-acetylmuramoyl-pentapeptide-transferase.